The chain runs to 713 residues: Fibroblast growth factor receptor 4 (713 aa).

The N-terminal stretch at 1–20 (MLPLWLVLAGLLLAVGPAAS) is a signal peptide. Residues 21–54 (HRGEMEPDSLASGDDDEDSDGDGPHGDRSEEPVY) are disordered. Topologically, residues 21 to 281 (HRGEMEPDSL…AETSEAKYTD (261 aa)) are extracellular. Residues 42–54 (DGPHGDRSEEPVY) show a composition bias toward basic and acidic residues. Ig-like C2-type domains follow at residues 59-152 (PYWT…YLLD) and 161-261 (PILQ…AWLT). Cysteines 84 and 136 form a disulfide. N-linked (GlcNAc...) asparagine glycosylation is found at Asn-133, Asn-170, Asn-202, Asn-223, and Asn-234. Cys-183 and Cys-245 are disulfide-bonded. Residues 282–302 (IIIYTSGSLAVAMALIIVVLC) traverse the membrane as a helical segment. The Cytoplasmic portion of the chain corresponds to 303–713 (RMQTQSSKQP…CLFSCPSGRT (411 aa)). Residues 379-667 (LVLGKPLGEG…ILAAISEEYL (289 aa)) enclose the Protein kinase domain. ATP-binding positions include 385–393 (LGEGCFGQV) and Lys-415. Catalysis depends on Asp-524, which acts as the Proton acceptor. A phosphotyrosine; by autocatalysis mark is found at Tyr-554, Tyr-555, and Tyr-666.

This sequence belongs to the protein kinase superfamily. Tyr protein kinase family. Fibroblast growth factor receptor subfamily. As to quaternary structure, monomer. Homodimer after ligand binding. Interacts with FGF1, FGF2, FGF4, FGF6, FGF8, FGF9, FGF16, FGF17, FGF18, FGF19, FGF21 and FGF23 (in vitro). Binding affinity for FGF family members is enhanced by interactions between FGFs and heparan sulfate proteoglycans. Interacts with KLB; this strongly increases the affinity for FGF19 and FGF23. Affinity for FGF19 is strongly increased by KLB and sulfated glycosaminoglycans. KLB and KL both interact with the core-glycosylated FGFR4 in the endoplasmic reticulum and promote its degradation, so that only FGFR4 with fully mature N-glycans is expressed at the cell surface. Identified in a complex with NCAM1, CDH2, PLCG1, FRS2, SRC, SHC1, GAP43 and CTTN. Interacts with MMP14 and HIP1. Interacts with STAT3. N-glycosylated. Full maturation of the glycan chains in the Golgi is essential for high affinity interaction with FGF19. Post-translationally, ubiquitinated. Subject to proteasomal degradation when not fully glycosylated. In terms of processing, autophosphorylated. Binding of FGF family members together with heparan sulfate proteoglycan or heparin promotes receptor dimerization and autophosphorylation on tyrosine residues. Autophosphorylation occurs in trans between the two FGFR molecules present in the dimer.

The protein localises to the cell membrane. It localises to the endosome. The protein resides in the endoplasmic reticulum. It carries out the reaction L-tyrosyl-[protein] + ATP = O-phospho-L-tyrosyl-[protein] + ADP + H(+). With respect to regulation, present in an inactive conformation in the absence of bound ligand. Ligand binding leads to dimerization and activation by autophosphorylation on tyrosine residues. Its function is as follows. Tyrosine-protein kinase that acts as a cell-surface receptor for fibroblast growth factors and plays a role in the regulation of cell proliferation, differentiation and migration, and in regulation of lipid metabolism, bile acid biosynthesis, glucose uptake, vitamin D metabolism and phosphate homeostasis. Required for normal down-regulation of the expression of CYP7A1, the rate-limiting enzyme in bile acid synthesis, in response to FGF19. Phosphorylates PLCG1 and FRS2. Ligand binding leads to the activation of several signaling cascades. Activation of PLCG1 leads to the production of the cellular signaling molecules diacylglycerol and inositol 1,4,5-trisphosphate. Phosphorylation of FRS2 triggers recruitment of GRB2, GAB1, PIK3R1 and SOS1, and mediates activation of RAS, MAPK1/ERK2, MAPK3/ERK1 and the MAP kinase signaling pathway, as well as of the AKT1 signaling pathway. Promotes SRC-dependent phosphorylation of the matrix protease MMP14 and its lysosomal degradation. FGFR4 signaling is down-regulated by receptor internalization and degradation; MMP14 promotes internalization and degradation of FGFR4. The sequence is that of Fibroblast growth factor receptor 4 (FGFR4) from Coturnix coturnix (Common quail).